A 268-amino-acid chain; its full sequence is Imidazole glycerol phosphate synthase subunit HisF (268 aa).

Active-site residues include aspartate 12 and aspartate 131.

This sequence belongs to the HisA/HisF family. As to quaternary structure, heterodimer of HisH and HisF.

The protein localises to the cytoplasm. The catalysed reaction is 5-[(5-phospho-1-deoxy-D-ribulos-1-ylimino)methylamino]-1-(5-phospho-beta-D-ribosyl)imidazole-4-carboxamide + L-glutamine = D-erythro-1-(imidazol-4-yl)glycerol 3-phosphate + 5-amino-1-(5-phospho-beta-D-ribosyl)imidazole-4-carboxamide + L-glutamate + H(+). Its pathway is amino-acid biosynthesis; L-histidine biosynthesis; L-histidine from 5-phospho-alpha-D-ribose 1-diphosphate: step 5/9. Its function is as follows. IGPS catalyzes the conversion of PRFAR and glutamine to IGP, AICAR and glutamate. The HisF subunit catalyzes the cyclization activity that produces IGP and AICAR from PRFAR using the ammonia provided by the HisH subunit. This Salinibacter ruber (strain DSM 13855 / M31) protein is Imidazole glycerol phosphate synthase subunit HisF.